A 399-amino-acid polypeptide reads, in one-letter code: S-adenosylmethionine synthase (399 aa).

His17 contacts ATP. Asp19 lines the Mg(2+) pocket. Glu45 contributes to the K(+) binding site. 2 residues coordinate L-methionine: Glu58 and Gln101. A flexible loop region spans residues 101–111 (QSADIAMGVDQ). Residues 177–179 (DGK), 244–245 (RF), Asp253, 259–260 (RK), Ala276, and Lys280 contribute to the ATP site. Asp253 contacts L-methionine. Lys284 lines the L-methionine pocket.

Belongs to the AdoMet synthase family. In terms of assembly, homotetramer; dimer of dimers. Mg(2+) serves as cofactor. The cofactor is K(+).

It localises to the cytoplasm. The enzyme catalyses L-methionine + ATP + H2O = S-adenosyl-L-methionine + phosphate + diphosphate. Its pathway is amino-acid biosynthesis; S-adenosyl-L-methionine biosynthesis; S-adenosyl-L-methionine from L-methionine: step 1/1. In terms of biological role, catalyzes the formation of S-adenosylmethionine (AdoMet) from methionine and ATP. The overall synthetic reaction is composed of two sequential steps, AdoMet formation and the subsequent tripolyphosphate hydrolysis which occurs prior to release of AdoMet from the enzyme. The polypeptide is S-adenosylmethionine synthase (Bacillus anthracis (strain A0248)).